We begin with the raw amino-acid sequence, 551 residues long: Adenine deaminase (551 aa).

The protein belongs to the metallo-dependent hydrolases superfamily. Adenine deaminase family. Mn(2+) is required as a cofactor.

The catalysed reaction is adenine + H2O + H(+) = hypoxanthine + NH4(+). This Methanosarcina barkeri (strain Fusaro / DSM 804) protein is Adenine deaminase.